Consider the following 289-residue polypeptide: WUSCHEL-related homeobox 1 (289 aa).

Low complexity predominate over residues 1–11 (MDHMQQQQRQQ). The segment at 1 to 34 (MDHMQQQQRQQVGGGGGEEVAGRGGVPVCRPSGT) is disordered. Gly residues predominate over residues 12–25 (VGGGGGEEVAGRGG). The segment at residues 31–96 (PSGTRWTPTT…NHKARERQKK (66 aa)) is a DNA-binding region (homeobox; WUS-type).

It belongs to the WUS homeobox family. In terms of assembly, interacts with TPR1, TPR2 and TPR3. In terms of tissue distribution, expressed in young leaf primordia. Expressed in branch an floral meristems. Transiently expressed in the shoot apex.

It is found in the nucleus. In terms of biological role, transcription repressor required for the formation and development of tiller buds and panicles. Required for tiller formation and female sterility. Required for the early developmental stages of axillary meristem formation. Plays a role in maintaining the axillary premeristem zone and in promoting the formation of the axillary meristem by promoting OSH1 expression. Does not seem to be involved in maintenance of the shoot apical meristem (SAM). This is WUSCHEL-related homeobox 1 from Oryza sativa subsp. japonica (Rice).